The chain runs to 1103 residues: Coatomer subunit beta (1103 aa).

HEAT repeat units lie at residues 51-89 (EAYTRLLMTVIRYAMPSKDKRVKKLTQLYLEIVGKCRPD), 94-129 (EEMILICNALRNDLMSPNEYVRGSTLRLLSKIRQFK), 130-166 (VLEPLVEAILQNLTHRHSYVRRNAVMCVYSIVKNFGL), 247-284 (QQKAGLLRLIVSILPNTLPSVAYEGACSLLALSRAPVS), 322-359 (RTMEEFVIDLLRGLQTPSLEVRRKILDLVLQIVGKNSV), 365-404 (VLKRELLRTAEPEQLTVPRTMEYRRLLIKAVHSCCTRFPE), and 405-441 (AAASVVNVLIDFPGDPDVTTATEVAVVVRELVATCVH).

As to quaternary structure, oligomeric complex that consists of at least the alpha, beta, beta', gamma, delta, epsilon and zeta subunits.

The protein localises to the cytoplasm. The protein resides in the golgi apparatus membrane. It localises to the cytoplasmic vesicle. Its subcellular location is the COPI-coated vesicle membrane. The coatomer is a cytosolic protein complex that binds to dilysine motifs and reversibly associates with Golgi non-clathrin-coated vesicles, which further mediate biosynthetic protein transport from the ER, via the Golgi up to the trans Golgi network. Coatomer complex is required for budding from Golgi membranes, and is essential for the retrograde Golgi-to-ER transport of dilysine-tagged proteins. The sequence is that of Coatomer subunit beta from Toxoplasma gondii.